The sequence spans 766 residues: Cytoplasmic polyadenylation element-binding protein 3 (766 aa).

Disordered regions lie at residues 1–35 (MSQE…TSET), 131–179 (VPSR…ARRL), and 216–299 (PVPI…LPPR). Composition is skewed to polar residues over residues 233-256 (ETPT…SDYQ) and 276-289 (STPN…NRDN). In terms of domain architecture, RRM spans 310 to 332 (IFVGGVPWDITEAALKDSFGEFG). The interval 578–602 (KAFSGPNRRSHLSSNSPSKPASLMS) is disordered. Positions 589-602 (LSSNSPSKPASLMS) are enriched in low complexity.

Cytoplasmic polyadenylation element binding protein that binds to and regulates the translation of specific mRNAs. This chain is Cytoplasmic polyadenylation element-binding protein 3 (cpb-3), found in Caenorhabditis remanei (Caenorhabditis vulgaris).